We begin with the raw amino-acid sequence, 535 residues long: Probable lipid II flippase MurJ (535 aa).

The next 12 helical transmembrane spans lie at 90-110 (VLFT…PFIV), 131-151 (FATI…MAGM), 159-179 (FAAA…LAYA), 192-212 (DLSW…WVAV), 233-253 (LLVL…NLLI), 274-294 (IYQL…LPEL), 316-336 (FTLF…EPIV), 350-370 (TVVV…FVLI), 388-408 (IFAG…FPSL), 413-433 (IATA…ATLV), 451-471 (LVIA…WLAF), and 484-504 (LTLC…AFGI).

The protein belongs to the MurJ/MviN family.

The protein resides in the cell inner membrane. The protein operates within cell wall biogenesis; peptidoglycan biosynthesis. Involved in peptidoglycan biosynthesis. Transports lipid-linked peptidoglycan precursors from the inner to the outer leaflet of the cytoplasmic membrane. The protein is Probable lipid II flippase MurJ of Rhizobium meliloti (strain 1021) (Ensifer meliloti).